The chain runs to 141 residues: Large ribosomal subunit protein uL11 (141 aa).

It belongs to the universal ribosomal protein uL11 family. Part of the ribosomal stalk of the 50S ribosomal subunit. Interacts with L10 and the large rRNA to form the base of the stalk. L10 forms an elongated spine to which L12 dimers bind in a sequential fashion forming a multimeric L10(L12)X complex. One or more lysine residues are methylated.

Functionally, forms part of the ribosomal stalk which helps the ribosome interact with GTP-bound translation factors. This Streptococcus thermophilus (strain CNRZ 1066) protein is Large ribosomal subunit protein uL11.